The following is a 607-amino-acid chain: Arginine--tRNA ligase (607 aa).

Residues 147-157 (PNIAKEMHVGH) carry the 'HIGH' region motif.

Belongs to the class-I aminoacyl-tRNA synthetase family. Monomer.

The protein localises to the cytoplasm. The enzyme catalyses tRNA(Arg) + L-arginine + ATP = L-arginyl-tRNA(Arg) + AMP + diphosphate. The sequence is that of Arginine--tRNA ligase from Prochlorococcus marinus (strain NATL2A).